The following is a 302-amino-acid chain: Uroporphyrinogen-III synthase, chloroplastic (302 aa).

The segment at 1-39 is disordered; sequence MALSSSSHLLPFSRPPATFPRARHAGGGRGRAGATGRFI. The N-terminal 50 residues, 1-50, are a transit peptide targeting the chloroplast; that stretch reads MALSSSSHLLPFSRPPATFPRARHAGGGRGRAGATGRFIACSSPPPPDVV.

This sequence belongs to the uroporphyrinogen-III synthase family.

It is found in the plastid. Its subcellular location is the chloroplast. It carries out the reaction hydroxymethylbilane = uroporphyrinogen III + H2O. The protein operates within porphyrin-containing compound metabolism; protoporphyrin-IX biosynthesis; coproporphyrinogen-III from 5-aminolevulinate: step 3/4. In terms of biological role, catalyzes cyclization of the linear tetrapyrrole, hydroxymethylbilane, to the macrocyclic uroporphyrinogen III, a precursor of tetrapyrroles such as chlorophyll, heme and phycobilins. This Oryza sativa subsp. japonica (Rice) protein is Uroporphyrinogen-III synthase, chloroplastic (UROS).